A 363-amino-acid chain; its full sequence is MAVDSSNSATGPMRVFAIGNPILDLVAEVPSSFLDEFFLKRGDATLATPEQMRIYSTLDQFNPTSLPGGSALNSVRVVQKLLRKPGSAGYMGAIGDDPRGQVLKELCDKEGLATRFMVAPGQSTGVCAVLINEKERTLCTHLGACGSFRLPEDWTTFASGALIFYATAYTLTATPKNALEVAGYAHGIPNAIFTLNLSAPFCVELYKDAMQSLLLHTNILFGNEEEFAHLAKVHNLVAAEKTALSTANKEHAVEVCTGALRLLTAGQNTGATKLVVMTRGHNPVIAAEQTADGTVVVHEVGVPVVAAEKIVDTNGAGDAFVGGFLYALSQGKTVKQCIMCGNACAQDVIQHVGFSLSFTSLPC.

3 residues coordinate Mg(2+): Ala-185, Ile-188, and Ala-191. Residue Asp-318 is part of the active site.

It belongs to the carbohydrate kinase PfkB family. Mg(2+) is required as a cofactor.

The catalysed reaction is adenosine + ATP = AMP + ADP + H(+). The protein operates within purine metabolism; AMP biosynthesis via salvage pathway; AMP from adenosine: step 1/1. ATP-dependent phosphorylation of adenosine and other related nucleoside analogs to monophosphate derivatives. It is a key purine metabolic enzyme in the opportunistic parasitic protozoan toxoplasma gondii as it cannot synthesize purines de novo. The polypeptide is Adenosine kinase (AK) (Toxoplasma gondii).